Here is a 160-residue protein sequence, read N- to C-terminus: Nascent polypeptide-associated complex subunit alpha (160 aa).

The 66-residue stretch at 10–75 (TKGEKKTREA…HSFDDIASRL (66 aa)) folds into the NAC-A/B domain. The 40-residue stretch at 120 to 159 (VNPKDVEVVMKETKASREKVVETLIATKNDLVSAVLELTT) folds into the UBA domain.

The protein belongs to the NAC-alpha family. As to quaternary structure, part of the nascent polypeptide-associated complex (NAC), consisting of nacA and nacB.

The protein resides in the cytoplasm. It localises to the nucleus. Functionally, component of the nascent polypeptide-associated complex (NAC), a dynamic component of the ribosomal exit tunnel, protecting the emerging polypeptides from interaction with other cytoplasmic proteins to ensure appropriate nascent protein targeting. The NAC complex also promotes mitochondrial protein import by enhancing productive ribosome interactions with the outer mitochondrial membrane and blocks the inappropriate interaction of ribosomes translating non-secretory nascent polypeptides with translocation sites in the membrane of the endoplasmic reticulum. May also be involved in transcription regulation. This Dictyostelium discoideum (Social amoeba) protein is Nascent polypeptide-associated complex subunit alpha (nacA).